Consider the following 324-residue polypeptide: Antihemorrhagic factor jMSF (324 aa).

Positions 1-19 are cleaved as a signal peptide; the sequence is MHFLVALVLLGQIIGSTLS. Cystatin fetuin-A-type domains lie at 22–130 and 141–254; these read VRGD…VKCH and RNCP…SDCV. A Cell attachment site motif is present at residues 23–25; sequence RGD. Intrachain disulfides connect C28–C315, C85–C96, C110–C129, C143–C146, C205–C217, C230–C253, and C287–C291. A glycan (N-linked (GlcNAc...) asparagine) is linked at N204. N-linked (GlcNAc...) asparagine glycosylation occurs at N282.

Homodimer. As to expression, expressed by the liver.

The protein localises to the secreted. Functionally, suppress hemorrhage induced by metalloproteinases from the same venom (brevilysin-H3, -H4, -H6) and from habu venom (weak inhibition of the metalloproteinases HR2A). The non-hemorrhagic brevilysin-H2 is strongly inhibited by jMSF, whereas the brevilysin-L6 is not inhibited. Does not inhibit serine and cysteine proteases such as trypsin, chymotrypsin, thermolysin, and papain. The inhibition may occur by formation of a non-covalent complex between this protein and the proteinases at their metalloproteinase domains. The polypeptide is Antihemorrhagic factor jMSF (Gloydius blomhoffii (Mamushi)).